A 729-amino-acid polypeptide reads, in one-letter code: Pentatricopeptide repeat-containing protein At5g01110 (729 aa).

The interval 26-45 (TSSSPVFEPSSSSSSSSSSA) is disordered. Positions 27 to 45 (SSSPVFEPSSSSSSSSSSA) are enriched in low complexity. PPR repeat units follow at residues 112–147 (TSLS…GVSR), 164–198 (NDSV…GFTV), 199–233 (SIDA…GVGI), 234–268 (NVYT…GVYP), 269–303 (DIVT…GFSP), 304–338 (GVYT…GLSP), 339–373 (DSTT…DVVP), 374–408 (DLVC…GLIP), 409–443 (DNVI…GCAM), 444–478 (DVVT…ALFP), 479–513 (DSYT…RIRL), 514–548 (DVVT…EILP), 549–583 (TPIS…NIKP), 584–618 (TVMI…GFVP), 619–649 (DCIS…MEEE), 656–690 (DVFT…GVNP), and 691–725 (DRST…GFSP).

It belongs to the PPR family. P subfamily.

This is Pentatricopeptide repeat-containing protein At5g01110 from Arabidopsis thaliana (Mouse-ear cress).